The chain runs to 172 residues: uncharacterized protein (172 aa).

Residues 22 to 64 (RSVSSSPAAKQPAPGTVAQSFPPGELALRDETGGRGRGTRGIR) form a disordered region.

This is an uncharacterized protein from Human cytomegalovirus (strain AD169) (HHV-5).